The primary structure comprises 503 residues: Maturase K (503 aa).

This sequence belongs to the intron maturase 2 family. MatK subfamily.

Its subcellular location is the plastid. The protein resides in the chloroplast. Functionally, usually encoded in the trnK tRNA gene intron. Probably assists in splicing its own and other chloroplast group II introns. This chain is Maturase K, found in Diospyros kaki (Kaki persimmon).